The chain runs to 1139 residues: Retinoblastoma-like protein 2 (1139 aa).

The interval Met-1 to Ile-45 is disordered. The segment covering Ser-8–Ala-17 has biased composition (pro residues). Positions Ser-21 to Asp-33 are enriched in acidic residues. Ser-413 carries the post-translational modification Phosphoserine. Thr-417 carries the post-translational modification Phosphothreonine. The interval Thr-417–Val-616 is domain A. Residues Thr-417–Tyr-1024 are pocket; binds E1A. The O-linked (GlcNAc) serine glycan is linked to Ser-420. Residues Pro-617–Ser-827 are spacer. Ser-639 bears the Phosphoserine mark. Thr-642 is subject to Phosphothreonine. The disordered stretch occupies residues Gly-654–Thr-678. Phosphoserine is present on residues Ser-662, Ser-672, and Ser-688. Residues Ile-810–Ser-827 show a composition bias toward low complexity. 2 disordered regions span residues Ile-810–Arg-831 and Lys-933–Glu-999. The tract at residues Asn-828–Tyr-1024 is domain B. Polar residues predominate over residues Ser-941–Glu-955. A phosphoserine mark is found at Ser-948, Ser-952, Ser-966, Ser-971, Ser-972, and Ser-973. Over residues Asp-964 to Ser-973 the composition is skewed to low complexity. Thr-974 carries the post-translational modification Phosphothreonine. The span at Val-977 to Pro-987 shows a compositional bias: pro residues. A phosphoserine mark is found at Ser-981 and Ser-982. Thr-986 bears the Phosphothreonine mark. A phosphoserine mark is found at Ser-1035, Ser-1068, Ser-1080, and Ser-1112.

This sequence belongs to the retinoblastoma protein (RB) family. Interacts with AATF. Interacts with KMT5B, KMT5C and USP4. Component of the DREAM complex (also named LINC complex) at least composed of E2F4, E2F5, LIN9, LIN37, LIN52, LIN54, MYBL1, MYBL2, RBL1, RBL2, RBBP4, TFDP1 and TFDP2. The complex exists in quiescent cells where it represses cell cycle-dependent genes. It dissociates in S phase when LIN9, LIN37, LIN52 and LIN54 form a subcomplex that binds to MYBL2. Interacts with RINT1. Interacts with PML (isoform PML-1, isoform PML-2, isoform PML-3, isoform PML-4 and isoform PML-5). Interacts with RBBP9. Interacts with CD53. In terms of assembly, (Microbial infection) Interacts with JC virus small t antigen. Post-translationally, during G0 and early G1 phase of the cell cycle, phosphorylated on Ser-639 and on 5 sites within the domain B. Phosphorylation on Ser-672 in G1 leads to its ubiquitin-dependent proteolysis.

It is found in the nucleus. In terms of biological role, key regulator of entry into cell division. Directly involved in heterochromatin formation by maintaining overall chromatin structure and, in particular, that of constitutive heterochromatin by stabilizing histone methylation. Recruits and targets histone methyltransferases KMT5B and KMT5C, leading to epigenetic transcriptional repression. Controls histone H4 'Lys-20' trimethylation. Probably acts as a transcription repressor by recruiting chromatin-modifying enzymes to promoters. Potent inhibitor of E2F-mediated trans-activation, associates preferentially with E2F5. Binds to cyclins A and E. Binds to and may be involved in the transforming capacity of the adenovirus E1A protein. May act as a tumor suppressor. The polypeptide is Retinoblastoma-like protein 2 (RBL2) (Homo sapiens (Human)).